The following is a 342-amino-acid chain: Isopentenyl-diphosphate delta-isomerase (342 aa).

Arg-12–Lys-13 is a binding site for substrate. FMN is bound by residues Ala-71–Thr-73, Ser-101, and Asn-129. Ser-101 to Arg-103 is a substrate binding site. Position 163 (Gln-163) interacts with substrate. Glu-164 is a Mg(2+) binding site. FMN contacts are provided by residues Lys-195, Thr-225, Gly-272–Arg-274, and Ala-293–Arg-294.

The protein belongs to the IPP isomerase type 2 family. In terms of assembly, homooctamer. Dimer of tetramers. Requires FMN as cofactor. NADPH serves as cofactor. The cofactor is Mg(2+).

It localises to the cytoplasm. It catalyses the reaction isopentenyl diphosphate = dimethylallyl diphosphate. In terms of biological role, involved in the biosynthesis of isoprenoids. Catalyzes the 1,3-allylic rearrangement of the homoallylic substrate isopentenyl (IPP) to its allylic isomer, dimethylallyl diphosphate (DMAPP). The polypeptide is Isopentenyl-diphosphate delta-isomerase (Mycolicibacterium vanbaalenii (strain DSM 7251 / JCM 13017 / BCRC 16820 / KCTC 9966 / NRRL B-24157 / PYR-1) (Mycobacterium vanbaalenii)).